A 281-amino-acid polypeptide reads, in one-letter code: NADPH-dependent 7-cyano-7-deazaguanine reductase (281 aa).

88-90 (VES) contributes to the substrate binding site. NADPH is bound at residue 90–91 (SK). Cysteine 189 serves as the catalytic Thioimide intermediate. The active-site Proton donor is aspartate 196. 228–229 (HE) contacts substrate. Position 257–258 (257–258 (RG)) interacts with NADPH.

It belongs to the GTP cyclohydrolase I family. QueF type 2 subfamily. Homodimer.

It is found in the cytoplasm. It catalyses the reaction 7-aminomethyl-7-carbaguanine + 2 NADP(+) = 7-cyano-7-deazaguanine + 2 NADPH + 3 H(+). It participates in tRNA modification; tRNA-queuosine biosynthesis. Functionally, catalyzes the NADPH-dependent reduction of 7-cyano-7-deazaguanine (preQ0) to 7-aminomethyl-7-deazaguanine (preQ1). The chain is NADPH-dependent 7-cyano-7-deazaguanine reductase from Klebsiella pneumoniae (strain 342).